The sequence spans 932 residues: von Willebrand factor A domain-containing protein DDB_G0292028 (932 aa).

The segment at 1–49 (MNFIKKVIGGGSSKSKTDIKIEDEQHEQQHEQQHEKQQIPDKISTSKVN) is disordered. Over residues 15 to 39 (SKTDIKIEDEQHEQQHEQQHEKQQI) the composition is skewed to basic and acidic residues. Residues 95–222 (LTSPGLNTKV…DVTVNITITS (128 aa)) form the VIT domain. One can recognise a VWFA domain in the interval 342 to 521 (EFIFVLDCSG…IAMQPTLSNI (180 aa)). Disordered stretches follow at residues 661–752 (QQIN…SQAQ) and 800–834 (TSQI…STSS). Residues 677–686 (TRVQGSSSVF) are compositionally biased toward polar residues. Residues 815–834 (SSSPTIQKSSSLPSRPSTSS) are compositionally biased toward low complexity.

This Dictyostelium discoideum (Social amoeba) protein is von Willebrand factor A domain-containing protein DDB_G0292028.